Here is a 231-residue protein sequence, read N- to C-terminus: Sugar fermentation stimulation protein homolog (231 aa).

This sequence belongs to the SfsA family.

The protein is Sugar fermentation stimulation protein homolog of Syntrophotalea carbinolica (strain DSM 2380 / NBRC 103641 / GraBd1) (Pelobacter carbinolicus).